The following is a 718-amino-acid chain: D-(-)-3-hydroxybutyrate oligomer hydrolase (718 aa).

Ser-320 acts as the Charge relay system in catalysis.

It belongs to the D-(-)-3-hydroxybutyrate oligomer hydrolase family.

The protein localises to the cytoplasm. The catalysed reaction is (3R)-hydroxybutanoate dimer + H2O = 2 (R)-3-hydroxybutanoate + H(+). Its pathway is lipid metabolism; butanoate metabolism. Inhibited by diisopropylfluorophosphate (DFP). Functionally, participates in the degradation of poly-3-hydroxybutyrate (PHB). It works downstream of poly(3-hydroxybutyrate) depolymerase, hydrolyzing D(-)-3-hydroxybutyrate oligomers of various length (3HB-oligomers) into 3HB-monomers. Seems to have also poly(3-hydroxybutyrate) depolymerase activity since it is able to release 3HB-monomers from artificial amorphous PHB. This chain is D-(-)-3-hydroxybutyrate oligomer hydrolase (phaZ2), found in Cupriavidus necator (strain ATCC 17699 / DSM 428 / KCTC 22496 / NCIMB 10442 / H16 / Stanier 337) (Ralstonia eutropha).